The primary structure comprises 539 residues: CTP synthase (539 aa).

The interval 1–267 (MTKYIFVTGG…DQKVCDFLHL (267 aa)) is amidoligase domain. Serine 13 contacts CTP. A UTP-binding site is contributed by serine 13. ATP is bound at residue 14-19 (SLGKGI). Tyrosine 54 provides a ligand contact to L-glutamine. Residue aspartate 71 coordinates ATP. Positions 71 and 141 each coordinate Mg(2+). CTP contacts are provided by residues 148–150 (DIE), 188–193 (KTKPTQ), and lysine 224. Residues 188-193 (KTKPTQ) and lysine 224 each bind UTP. The Glutamine amidotransferase type-1 domain occupies 294–537 (KITLVGKYVE…IGAASGLPAQ (244 aa)). Glycine 356 is an L-glutamine binding site. The active-site Nucleophile; for glutamine hydrolysis is the cysteine 383. Residues 384 to 387 (LGMQ), glutamate 407, and arginine 465 contribute to the L-glutamine site. Catalysis depends on residues histidine 510 and glutamate 512.

This sequence belongs to the CTP synthase family. As to quaternary structure, homotetramer.

It carries out the reaction UTP + L-glutamine + ATP + H2O = CTP + L-glutamate + ADP + phosphate + 2 H(+). It catalyses the reaction L-glutamine + H2O = L-glutamate + NH4(+). The enzyme catalyses UTP + NH4(+) + ATP = CTP + ADP + phosphate + 2 H(+). The protein operates within pyrimidine metabolism; CTP biosynthesis via de novo pathway; CTP from UDP: step 2/2. Its activity is regulated as follows. Allosterically activated by GTP, when glutamine is the substrate; GTP has no effect on the reaction when ammonia is the substrate. The allosteric effector GTP functions by stabilizing the protein conformation that binds the tetrahedral intermediate(s) formed during glutamine hydrolysis. Inhibited by the product CTP, via allosteric rather than competitive inhibition. Its function is as follows. Catalyzes the ATP-dependent amination of UTP to CTP with either L-glutamine or ammonia as the source of nitrogen. Regulates intracellular CTP levels through interactions with the four ribonucleotide triphosphates. In Lactobacillus acidophilus (strain ATCC 700396 / NCK56 / N2 / NCFM), this protein is CTP synthase.